Consider the following 82-residue polypeptide: 4-(gamma-L-glutamylamino)butanoyl-[BtrI acyl-carrier protein] monooxygenase BtrO (82 aa).

In terms of assembly, homotetramer.

It catalyses the reaction 4-(gamma-L-glutamylamino)butanoyl-[BtrI ACP] + FMNH2 + O2 = 4-(gamma-L-glutamylamino)-(2S)-2-hydroxybutanoyl-[BtrI ACP] + FMN + H2O + H(+). It functions in the pathway antibiotic biosynthesis; butirosin biosynthesis. In terms of biological role, NAD(P)H:FMN oxidoreductase component of a two-component system involved in the biosynthesis of the side chain of the aminoglycoside antibiotics in the biosynthetic pathway of butirosin. Together with BtrO, mediates hydroxylation of gamma-L-Glu-GABA-S-BtrI. This chain is 4-(gamma-L-glutamylamino)butanoyl-[BtrI acyl-carrier protein] monooxygenase BtrO (btrV), found in Niallia circulans (Bacillus circulans).